The following is a 33-amino-acid chain: Photosystem II reaction center protein Psb30 (33 aa).

A helical membrane pass occupies residues 5-25 (VIAQLASLALIIVLGPLVIGL).

This sequence belongs to the Psb30/Ycf12 family. PSII is composed of 1 copy each of membrane proteins PsbA, PsbB, PsbC, PsbD, PsbE, PsbF, PsbH, PsbI, PsbJ, PsbK, PsbL, PsbM, PsbT, PsbX, PsbY, PsbZ, Psb30/Ycf12, peripheral proteins of the oxygen-evolving complex and a large number of cofactors. It forms dimeric complexes.

The protein localises to the plastid. The protein resides in the chloroplast thylakoid membrane. Its function is as follows. A core subunit of photosystem II (PSII), probably helps stabilize the reaction center. This is Photosystem II reaction center protein Psb30 from Chara vulgaris (Common stonewort).